A 550-amino-acid polypeptide reads, in one-letter code: Dihydroxy-acid dehydratase (550 aa).

Residue Asp78 coordinates Mg(2+). A [2Fe-2S] cluster-binding site is contributed by Cys119. Residues Asp120 and Lys121 each coordinate Mg(2+). N6-carboxylysine is present on Lys121. Residue Cys191 coordinates [2Fe-2S] cluster. Glu440 serves as a coordination point for Mg(2+). Ser466 (proton acceptor) is an active-site residue.

The protein belongs to the IlvD/Edd family. In terms of assembly, homodimer. [2Fe-2S] cluster serves as cofactor. It depends on Mg(2+) as a cofactor.

The enzyme catalyses (2R)-2,3-dihydroxy-3-methylbutanoate = 3-methyl-2-oxobutanoate + H2O. It catalyses the reaction (2R,3R)-2,3-dihydroxy-3-methylpentanoate = (S)-3-methyl-2-oxopentanoate + H2O. Its pathway is amino-acid biosynthesis; L-isoleucine biosynthesis; L-isoleucine from 2-oxobutanoate: step 3/4. The protein operates within amino-acid biosynthesis; L-valine biosynthesis; L-valine from pyruvate: step 3/4. Functions in the biosynthesis of branched-chain amino acids. Catalyzes the dehydration of (2R,3R)-2,3-dihydroxy-3-methylpentanoate (2,3-dihydroxy-3-methylvalerate) into 2-oxo-3-methylpentanoate (2-oxo-3-methylvalerate) and of (2R)-2,3-dihydroxy-3-methylbutanoate (2,3-dihydroxyisovalerate) into 2-oxo-3-methylbutanoate (2-oxoisovalerate), the penultimate precursor to L-isoleucine and L-valine, respectively. The sequence is that of Dihydroxy-acid dehydratase from Methanococcus maripaludis (strain C5 / ATCC BAA-1333).